Consider the following 582-residue polypeptide: 2-isopropylmalate synthase (582 aa).

A Pyruvate carboxyltransferase domain is found at Pro40–Asp314. Asp49, His253, His255, and Asn289 together coordinate Mg(2+). Residues Ser456 to Asp582 are regulatory domain.

The protein belongs to the alpha-IPM synthase/homocitrate synthase family. LeuA type 2 subfamily. In terms of assembly, homodimer. The cofactor is Mg(2+).

It is found in the cytoplasm. It catalyses the reaction 3-methyl-2-oxobutanoate + acetyl-CoA + H2O = (2S)-2-isopropylmalate + CoA + H(+). It participates in amino-acid biosynthesis; L-leucine biosynthesis; L-leucine from 3-methyl-2-oxobutanoate: step 1/4. In terms of biological role, catalyzes the condensation of the acetyl group of acetyl-CoA with 3-methyl-2-oxobutanoate (2-ketoisovalerate) to form 3-carboxy-3-hydroxy-4-methylpentanoate (2-isopropylmalate). This chain is 2-isopropylmalate synthase, found in Renibacterium salmoninarum (strain ATCC 33209 / DSM 20767 / JCM 11484 / NBRC 15589 / NCIMB 2235).